The primary structure comprises 288 residues: 30 kDa spicule matrix protein (288 aa).

Positions 1–20 (MRCFVYVLVCVVASVSYSRA) are cleaved as a signal peptide. The C-type lectin domain occupies 93–163 (ANMYCGQMHP…YTNWEGMVAP (71 aa)). N-linked (GlcNAc...) asparagine glycosylation is present at Asn103.

As to expression, spines and tube feet.

Matrix protein of the sea urchin embryo spicule. The function of the matrix proteins is to direct crystal growth in certain orientations and inhibit growth in others. The chain is 30 kDa spicule matrix protein (SM30) from Hemicentrotus pulcherrimus (Sea urchin).